We begin with the raw amino-acid sequence, 447 residues long: tRNA-2-methylthio-N(6)-dimethylallyladenosine synthase (447 aa).

Residues 1-116 (MYIRTFGCQM…LPDLIKRRRA (116 aa)) form the MTTase N-terminal domain. Residues Cys8, Cys45, Cys79, Cys153, Cys157, and Cys160 each contribute to the [4Fe-4S] cluster site. A Radical SAM core domain is found at 139–372 (RVDGATAFVS…QALINQQAAA (234 aa)). Residues 375–438 (QGMIGTRQRV…TNSLRGRVAG (64 aa)) enclose the TRAM domain.

This sequence belongs to the methylthiotransferase family. MiaB subfamily. Monomer. Requires [4Fe-4S] cluster as cofactor.

Its subcellular location is the cytoplasm. It catalyses the reaction N(6)-dimethylallyladenosine(37) in tRNA + (sulfur carrier)-SH + AH2 + 2 S-adenosyl-L-methionine = 2-methylsulfanyl-N(6)-dimethylallyladenosine(37) in tRNA + (sulfur carrier)-H + 5'-deoxyadenosine + L-methionine + A + S-adenosyl-L-homocysteine + 2 H(+). Functionally, catalyzes the methylthiolation of N6-(dimethylallyl)adenosine (i(6)A), leading to the formation of 2-methylthio-N6-(dimethylallyl)adenosine (ms(2)i(6)A) at position 37 in tRNAs that read codons beginning with uridine. The protein is tRNA-2-methylthio-N(6)-dimethylallyladenosine synthase of Bordetella pertussis (strain Tohama I / ATCC BAA-589 / NCTC 13251).